The sequence spans 281 residues: D-arabinitol 2-dehydrogenase [ribulose-forming] (281 aa).

Residues L31 and N52 each contribute to the NADP(+) site. S169 acts as the Proton donor in catalysis. NADP(+) contacts are provided by Y184, K188, I217, and T219. The active-site Proton acceptor is Y184. Residue K188 is the Lowers pKa of active site Tyr of the active site.

It belongs to the short-chain dehydrogenases/reductases (SDR) family.

The enzyme catalyses D-arabinitol + NAD(+) = D-ribulose + NADH + H(+). The protein operates within carbohydrate metabolism; D-arabinitol metabolism. The sequence is that of D-arabinitol 2-dehydrogenase [ribulose-forming] (ARD1) from Candida albicans (strain WO-1) (Yeast).